The following is a 575-amino-acid chain: Urease subunit alpha (575 aa).

Positions 137-575 constitute a Urease domain; it reads GGIDCHIHFI…LPMTQRYFLF (439 aa). Residues His-142, His-144, and Lys-225 each contribute to the Ni(2+) site. Residue Lys-225 is modified to N6-carboxylysine. His-227 is a substrate binding site. His-254 and His-280 together coordinate Ni(2+). His-328 acts as the Proton donor in catalysis. Residue Asp-368 participates in Ni(2+) binding.

Belongs to the metallo-dependent hydrolases superfamily. Urease alpha subunit family. In terms of assembly, heterotrimer of UreA (gamma), UreB (beta) and UreC (alpha) subunits. Three heterotrimers associate to form the active enzyme. The cofactor is Ni cation. Post-translationally, carboxylation allows a single lysine to coordinate two nickel ions.

It is found in the cytoplasm. The catalysed reaction is urea + 2 H2O + H(+) = hydrogencarbonate + 2 NH4(+). It participates in nitrogen metabolism; urea degradation; CO(2) and NH(3) from urea (urease route): step 1/1. The protein is Urease subunit alpha of Methylibium petroleiphilum (strain ATCC BAA-1232 / LMG 22953 / PM1).